A 505-amino-acid polypeptide reads, in one-letter code: Prenylcysteine oxidase 1 (505 aa).

Positions 1 to 27 are cleaved as a signal peptide; that stretch reads MGRVVAELVSSLLGLWLLLCSCGCPEG. Residues N196, N323, and N353 are each glycosylated (N-linked (GlcNAc...) asparagine).

This sequence belongs to the prenylcysteine oxidase family. FAD serves as cofactor. In terms of tissue distribution, widely expressed.

It is found in the lysosome. It carries out the reaction an S-polyprenyl-L-cysteine + O2 + H2O = a polyprenal + L-cysteine + H2O2. The enzyme catalyses S-(2E,6E)-farnesyl-L-cysteine + O2 + H2O = (2E,6E)-farnesal + L-cysteine + H2O2. It catalyses the reaction [(2E,6E,10E)-geranylgeranyl]-L-cysteine + O2 + H2O = (2E,6E,10E)-geranylgeranial + L-cysteine + H2O2. In terms of biological role, prenylcysteine oxidase that cleaves the thioether bond of prenyl-L-cysteines, such as farnesylcysteine and geranylgeranylcysteine. Only active against free prenylcysteines and not prenylcysteine residues within prenylated proteins or peptides. Involved in the final step in the degradation of prenylated proteins, by degrading prenylcysteines after the protein has been degraded. The chain is Prenylcysteine oxidase 1 from Homo sapiens (Human).